Consider the following 329-residue polypeptide: Porphobilinogen deaminase (329 aa).

The residue at position 250 (Cys-250) is an S-(dipyrrolylmethanemethyl)cysteine.

It belongs to the HMBS family. In terms of assembly, monomer. Requires dipyrromethane as cofactor.

The catalysed reaction is 4 porphobilinogen + H2O = hydroxymethylbilane + 4 NH4(+). It functions in the pathway porphyrin-containing compound metabolism; protoporphyrin-IX biosynthesis; coproporphyrinogen-III from 5-aminolevulinate: step 2/4. Its function is as follows. Tetrapolymerization of the monopyrrole PBG into the hydroxymethylbilane pre-uroporphyrinogen in several discrete steps. The sequence is that of Porphobilinogen deaminase from Burkholderia pseudomallei (strain 668).